A 399-amino-acid polypeptide reads, in one-letter code: Beta sliding clamp (399 aa).

Belongs to the beta sliding clamp family. In terms of assembly, forms a ring-shaped head-to-tail homodimer around DNA which binds and tethers DNA polymerases and other proteins to the DNA. The DNA replisome complex has a single clamp-loading complex (3 tau and 1 each of delta, delta', psi and chi subunits) which binds 3 Pol III cores (1 core on the leading strand and 2 on the lagging strand) each with a beta sliding clamp dimer. Additional proteins in the replisome are other copies of gamma, psi and chi, Ssb, DNA helicase and RNA primase.

The protein resides in the cytoplasm. In terms of biological role, confers DNA tethering and processivity to DNA polymerases and other proteins. Acts as a clamp, forming a ring around DNA (a reaction catalyzed by the clamp-loading complex) which diffuses in an ATP-independent manner freely and bidirectionally along dsDNA. Initially characterized for its ability to contact the catalytic subunit of DNA polymerase III (Pol III), a complex, multichain enzyme responsible for most of the replicative synthesis in bacteria; Pol III exhibits 3'-5' exonuclease proofreading activity. The beta chain is required for initiation of replication as well as for processivity of DNA replication. The protein is Beta sliding clamp (dnaN) of Mycobacterium leprae (strain TN).